Here is a 1073-residue protein sequence, read N- to C-terminus: Guanylyl cyclase C (1073 aa).

Residues 1-23 (MKTPLLALALWSLLLQLGLTFWP) form the signal peptide. Topologically, residues 24-433 (SSVSQNCHNG…IPGRGPQILM (410 aa)) are extracellular. Asn32, Asn43, Asn79, Asn195, Asn284, Asn307, and Asn402 each carry an N-linked (GlcNAc...) asparagine glycan. Residues 434–454 (IAVFTLTGTIVLLLLIALLVL) form a helical membrane-spanning segment. Residues 455-1073 (RKYKREYALR…NTTDNESTHF (619 aa)) lie on the Cytoplasmic side of the membrane. In terms of domain architecture, Protein kinase spans 489-749 (LKIDDDRRRD…KIENTLAKIF (261 aa)). The Guanylate cyclase domain maps to 824-954 (TIYFSDIVGF…DTVNTASRME (131 aa)).

Belongs to the adenylyl cyclase class-4/guanylyl cyclase family. Homotrimer. Interacts via its C-terminal region with NHERF4. Interacts with the lectin chaperone VIP36. Post-translationally, glycosylation at Asn-79 is required for interaction with VIP36 while glycosylation at Asn-402 modulates ligand-mediated GC-C activation.

The protein resides in the cell membrane. The protein localises to the endoplasmic reticulum membrane. The catalysed reaction is GTP = 3',5'-cyclic GMP + diphosphate. Its function is as follows. Guanylyl cyclase that catalyzes synthesis of cyclic GMP (cGMP) from GTP. In Sus scrofa (Pig), this protein is Guanylyl cyclase C (GUCY2C).